Here is a 342-residue protein sequence, read N- to C-terminus: Dihydroorotate dehydrogenase (quinone) (342 aa).

Residues 65–69 and Thr-89 contribute to the FMN site; that span reads AGLDK. Lys-69 contacts substrate. Position 114–118 (114–118) interacts with substrate; the sequence is NRMGF. FMN-binding residues include Asn-142 and Asn-175. Asn-175 is a binding site for substrate. The active-site Nucleophile is the Ser-178. Asn-180 is a binding site for substrate. Residues Lys-220 and Thr-248 each contribute to the FMN site. 249-250 is a substrate binding site; it reads NT. Residues Gly-271, Gly-300, and 321-322 each bind FMN; that span reads YT.

This sequence belongs to the dihydroorotate dehydrogenase family. Type 2 subfamily. As to quaternary structure, monomer. Requires FMN as cofactor.

Its subcellular location is the cell membrane. The catalysed reaction is (S)-dihydroorotate + a quinone = orotate + a quinol. It functions in the pathway pyrimidine metabolism; UMP biosynthesis via de novo pathway; orotate from (S)-dihydroorotate (quinone route): step 1/1. In terms of biological role, catalyzes the conversion of dihydroorotate to orotate with quinone as electron acceptor. This chain is Dihydroorotate dehydrogenase (quinone), found in Burkholderia pseudomallei (strain 668).